A 361-amino-acid polypeptide reads, in one-letter code: Protein-L-isoaspartate O-methyltransferase domain-containing protein 2 (361 aa).

Glycine 2 carries N-myristoyl glycine lipidation. Residue serine 64 is part of the active site. AdoMet binding motif stretches follow at residues leucine 85–leucine 94, tyrosine 160–tyrosine 164, and leucine 181–leucine 191. A BC-box region spans residues valine 240–alanine 250. The disordered stretch occupies residues serine 303 to asparagine 336. A compositionally biased stretch (acidic residues) spans asparagine 309 to glutamate 320. Residues glutamate 321–proline 331 are compositionally biased toward basic and acidic residues. The segment at leucine 345–proline 348 is CUL-box.

This sequence belongs to the methyltransferase superfamily. L-isoaspartyl/D-aspartyl protein methyltransferase family.

It localises to the cytoplasm. Functionally, may act as a substrate recognition component of an ECS (Elongin BC-CUL5-SOCS-box protein) E3 ubiquitin ligase complex which mediates the ubiquitination and subsequent proteasomal degradation of target proteins. May bind to the methyltransferase cofactor S-adenosylmethionine (AdoMet) via the N-terminal AdoMet binding motif, but probably does not display methyltransferase activity. In Homo sapiens (Human), this protein is Protein-L-isoaspartate O-methyltransferase domain-containing protein 2 (PCMTD2).